A 1199-amino-acid polypeptide reads, in one-letter code: DNA-directed RNA polymerase subunit beta' (1199 aa).

Zn(2+) contacts are provided by C60, C62, C75, and C78. D449, D451, and D453 together coordinate Mg(2+). 4 residues coordinate Zn(2+): C818, C892, C899, and C902.

Belongs to the RNA polymerase beta' chain family. In terms of assembly, the RNAP catalytic core consists of 2 alpha, 1 beta, 1 beta' and 1 omega subunit. When a sigma factor is associated with the core the holoenzyme is formed, which can initiate transcription. The cofactor is Mg(2+). It depends on Zn(2+) as a cofactor.

It carries out the reaction RNA(n) + a ribonucleoside 5'-triphosphate = RNA(n+1) + diphosphate. DNA-dependent RNA polymerase catalyzes the transcription of DNA into RNA using the four ribonucleoside triphosphates as substrates. This Bacillus velezensis (strain DSM 23117 / BGSC 10A6 / LMG 26770 / FZB42) (Bacillus amyloliquefaciens subsp. plantarum) protein is DNA-directed RNA polymerase subunit beta'.